The sequence spans 153 residues: MKLNTIKPGIGSAKPKRRVGRGIGSGLGKTCGRGHKGQKSRAGGFHKVGFEGGQMPLQRRLPKRGFTVYGKKQVREIKLSTLQLIDLSEFNPSVLYDHGLIKNINDPVKIILGNQLIKRAIKIKDLIISRGAKEAVEQMGGLVELTVKDVNGV.

Residues 1–42 (MKLNTIKPGIGSAKPKRRVGRGIGSGLGKTCGRGHKGQKSRA) form a disordered region. Residues 21–31 (RGIGSGLGKTC) are compositionally biased toward gly residues.

This sequence belongs to the universal ribosomal protein uL15 family. In terms of assembly, part of the 50S ribosomal subunit.

Functionally, binds to the 23S rRNA. The chain is Large ribosomal subunit protein uL15 from Nitrosomonas europaea (strain ATCC 19718 / CIP 103999 / KCTC 2705 / NBRC 14298).